The following is a 504-amino-acid chain: L-amino-acid oxidase (504 aa).

The first 18 residues, 1-18 (MNIFFMFSLLFLATLGSC), serve as a signal peptide directing secretion. Residues Cys28 and Cys191 are joined by a disulfide bond. FAD-binding positions include 61–62 (MS), 81–82 (EA), Arg89, and 105–108 (GPMR). Arg108 contributes to the substrate binding site. N-linked (GlcNAc...) asparagine glycosylation is present at Asn190. A substrate-binding site is contributed by His241. Position 279 (Val279) interacts with FAD. The cysteines at positions 349 and 430 are disulfide-linked. Asn379 is a glycosylation site (N-linked (GlcNAc...) asparagine). Tyr390 contacts substrate. Residues Glu475 and 482–487 (GWIDST) contribute to the FAD site. 482 to 483 (GW) contributes to the substrate binding site.

The protein belongs to the flavin monoamine oxidase family. FIG1 subfamily. As to quaternary structure, homodimer; non-covalently linked. FAD serves as cofactor. In terms of tissue distribution, expressed by the venom gland.

The protein localises to the secreted. The enzyme catalyses an L-alpha-amino acid + O2 + H2O = a 2-oxocarboxylate + H2O2 + NH4(+). Its function is as follows. Catalyzes an oxidative deamination of predominantly hydrophobic and aromatic L-amino acids, thus producing hydrogen peroxide that may contribute to the diverse toxic effects of this enzyme. Exhibits diverse biological activities, such as hemorrhage, hemolysis, edema, apoptosis of vascular endothelial cells or tumor cell lines, antibacterial and antiparasitic activities, as well as regulation of platelet aggregation. Its effect on platelets is controversial, since it either induces aggregation or inhibits agonist-induced aggregation. These different effects are probably due to different experimental conditions. This Echis ocellatus (Ocellated saw-scaled viper) protein is L-amino-acid oxidase.